The primary structure comprises 437 residues: tRNA-queuosine alpha-mannosyltransferase (437 aa).

The protein belongs to the glycosyltransferase group 1 family. Glycosyltransferase 4 subfamily.

The protein resides in the cytoplasm. It localises to the nucleus. It catalyses the reaction queuosine(34) in tRNA(Asp) + GDP-alpha-D-mannose = O-4''-alpha-D-mannosylqueuosine(34) in tRNA(Asp) + GDP + H(+). In terms of biological role, glycosyltransferase that specifically catalyzes mannosylation of cytoplasmic tRNA(Asp) modified with queuosine at position 34 (queuosine(34)). Mannosylates the cyclopentene moiety of queuosine(34) in tRNA(Asp) to form mannosyl-queuosine(34). Mannosylation of queuosine(34) in tRNA(Asp) is required to slow-down elongation at cognate codons, GAC and GAU, thereby regulating protein translation. The sequence is that of tRNA-queuosine alpha-mannosyltransferase (gtdc1) from Xenopus tropicalis (Western clawed frog).